We begin with the raw amino-acid sequence, 707 residues long: Vicilin-like seed storage protein At2g18540 (707 aa).

The first 24 residues, 1–24, serve as a signal peptide directing secretion; it reads MSRFRILPLSIFLCFVSLFFCTES. Residues 42–185 enclose the Cupin type-1 1 domain; it reads PLLVKKDQRT…AFAVPEDILR (144 aa). N-linked (GlcNAc...) asparagine glycosylation is found at asparagine 60, asparagine 203, asparagine 285, asparagine 356, asparagine 396, and asparagine 399. The Cupin type-1 2 domain maps to 247-403; sequence FNVFEEDPDF…SFNLSNETIK (157 aa). Basic and acidic residues predominate over residues 439–696; that stretch reads EEEEIERRRK…KKEEEEEKRR (258 aa). The disordered stretch occupies residues 439-707; sequence EEEEIERRRK…PPQPKPPEEI (269 aa). The span at 698–707 shows a compositional bias: pro residues; sequence PPQPKPPEEI.

The protein belongs to the 7S seed storage protein family.

In terms of biological role, seed storage protein. The sequence is that of Vicilin-like seed storage protein At2g18540 from Arabidopsis thaliana (Mouse-ear cress).